The sequence spans 310 residues: Aspartate carbamoyltransferase catalytic subunit (310 aa).

Carbamoyl phosphate contacts are provided by R58 and T59. K86 is a binding site for L-aspartate. R108, H136, and Q139 together coordinate carbamoyl phosphate. R169 and R224 together coordinate L-aspartate. Residues G265 and P266 each contribute to the carbamoyl phosphate site.

This sequence belongs to the aspartate/ornithine carbamoyltransferase superfamily. ATCase family. Heterododecamer (2C3:3R2) of six catalytic PyrB chains organized as two trimers (C3), and six regulatory PyrI chains organized as three dimers (R2).

The catalysed reaction is carbamoyl phosphate + L-aspartate = N-carbamoyl-L-aspartate + phosphate + H(+). It functions in the pathway pyrimidine metabolism; UMP biosynthesis via de novo pathway; (S)-dihydroorotate from bicarbonate: step 2/3. Functionally, catalyzes the condensation of carbamoyl phosphate and aspartate to form carbamoyl aspartate and inorganic phosphate, the committed step in the de novo pyrimidine nucleotide biosynthesis pathway. This chain is Aspartate carbamoyltransferase catalytic subunit, found in Citrifermentans bemidjiense (strain ATCC BAA-1014 / DSM 16622 / JCM 12645 / Bem) (Geobacter bemidjiensis).